A 315-amino-acid polypeptide reads, in one-letter code: MLKNKILATTLSVSLLAPLANPLLENAKAANDTEEIGKGSDIEIIKRTEDKTSNKWGVTQNIQFDFVKDKKYNKDALILKMQGFISSRTTYYNYKKTNHVKAMRWPFQYNIGLKTNDKYVSLINYLPKNKIESTNVSQTLGYNIGGNFQSAPSLGGNGSFNYSKSISYTQQNYVSEVEQQNSKSVLWGVKANSFATESGQKSAFDSDLFVGYKPHSKDPRDYFVPDSELPPLVQSGFNPSFIATVSHEKGSSDTSEFEITYGRNMDVTHAIKRSTHYGNSYLDGHRVHNAFVNRNYTVKYEVNWKTHEIKVKGQN.

The N-terminal stretch at 1–29 (MLKNKILATTLSVSLLAPLANPLLENAKA) is a signal peptide.

The protein belongs to the aerolysin family. In terms of assembly, toxicity requires sequential binding and synergistic association of a class S and a class F component which form heterooligomeric complexes. HlgC (class S) associates with HlgB (class F) thus forming an CB toxin.

Toxin that seems to act by forming pores in the membrane of the cell. Has a hemolytic and a leucotoxic activity. In Staphylococcus aureus (strain MSSA476), this protein is Gamma-hemolysin component C (hlgC).